Here is a 519-residue protein sequence, read N- to C-terminus: 2,3-bisphosphoglycerate-independent phosphoglycerate mutase (519 aa).

Residues D18 and S68 each coordinate Mn(2+). Catalysis depends on S68, which acts as the Phosphoserine intermediate. Substrate contacts are provided by residues H129, 159 to 160 (RD), R191, R197, 267 to 270 (RADR), and K341. 5 residues coordinate Mn(2+): D408, H412, D449, H450, and H468.

This sequence belongs to the BPG-independent phosphoglycerate mutase family. In terms of assembly, monomer. Requires Mn(2+) as cofactor.

It carries out the reaction (2R)-2-phosphoglycerate = (2R)-3-phosphoglycerate. Its pathway is carbohydrate degradation; glycolysis; pyruvate from D-glyceraldehyde 3-phosphate: step 3/5. Its function is as follows. Catalyzes the interconversion of 2-phosphoglycerate and 3-phosphoglycerate. This chain is 2,3-bisphosphoglycerate-independent phosphoglycerate mutase, found in Coxiella burnetii (strain RSA 493 / Nine Mile phase I).